We begin with the raw amino-acid sequence, 214 residues long: UBX domain-containing protein 10 (214 aa).

Positions Met-1–Ser-13 are enriched in basic residues. Residues Met-1–Val-79 are disordered. Over residues Met-16–Thr-25 the composition is skewed to polar residues. Positions Ser-49–Ser-60 are enriched in low complexity. The UBX domain maps to Pro-127 to Ile-204.

Belongs to the UBXN10 family.

It localises to the cell projection. The protein localises to the cilium. Required for ciliogenesis. Acts as a tethering factor that facilitates recruitment of vcp/p97 to the intraflagellar transport complex B (IFT-B) in cilia. The chain is UBX domain-containing protein 10 from Danio rerio (Zebrafish).